The chain runs to 542 residues: Coiled-coil domain-containing protein 60 (542 aa).

Positions 70 to 97 (TMLQEETAFKKHQQHLKKLQEEELNKFQ) form a coiled coil. Disordered stretches follow at residues 228 to 284 (ATRK…EEEV) and 334 to 358 (QTTHKSSERSSTTSGESHIQVTQKK). Composition is skewed to low complexity over residues 245 to 261 (SGGSSPQSSMMSVNPSS) and 342 to 351 (RSSTTSGESH).

The chain is Coiled-coil domain-containing protein 60 (Ccdc60) from Rattus norvegicus (Rat).